Consider the following 526-residue polypeptide: Probable di/tripeptide-binding protein 5 (526 aa).

The signal sequence occupies residues 1 to 21 (MRLAAFSLFLAPLLLAQPAAA).

This sequence belongs to the bacterial solute-binding protein 5 family. The complex is composed of two ATP-binding proteins (DppD and DppF), two transmembrane proteins (DppB and DppC) and a solute-binding protein (DppA5). Five orthologous SBPs (DppA1-A5) are present in P.aeruginosa, which increases the substrate specificity of the DppBCDF transporter.

Functionally, part of the ABC transporter DppABCDF involved in the uptake of various di/tripeptides. In Pseudomonas aeruginosa (strain UCBPP-PA14), this protein is Probable di/tripeptide-binding protein 5.